The following is a 511-amino-acid chain: Sulfate adenylyltransferase (511 aa).

Residues 1–167 form an N-terminal region; it reads MPAPHGGILQ…LEAIQLPQHY (167 aa). A catalytic region spans residues 168–393; the sequence is DYPGLRKTPA…LRESNPPRPK (226 aa). Gln-195 provides a ligand contact to sulfate. ATP-binding positions include 195–198 and 289–292; these read QTRN and GRDH. Residues Thr-196, Arg-197, and Asn-198 contribute to the active site. Arg-197 is a sulfate binding site. A sulfate-binding site is contributed by Ala-293. Val-331 contacts ATP. The segment at 394 to 511 is required for oligomerization; adenylyl-sulfate kinase-like; that stretch reads QGFSIVLGNS…FLEDNGFFVF (118 aa).

The protein belongs to the sulfate adenylyltransferase family. In terms of assembly, homohexamer. Dimer of trimers.

Its subcellular location is the cytoplasm. The enzyme catalyses sulfate + ATP + H(+) = adenosine 5'-phosphosulfate + diphosphate. It functions in the pathway sulfur metabolism; hydrogen sulfide biosynthesis; sulfite from sulfate: step 1/3. Functionally, catalyzes the first intracellular reaction of sulfate assimilation, forming adenosine-5'-phosphosulfate (APS) from inorganic sulfate and ATP. Plays an important role in sulfate activation as a component of the biosynthesis pathway of sulfur-containing amino acids. The sequence is that of Sulfate adenylyltransferase from Saccharomyces cerevisiae (strain ATCC 204508 / S288c) (Baker's yeast).